The primary structure comprises 516 residues: Extracellular endo-inulinase inuA (516 aa).

Positions 1-25 (MLNPKVAYMVWMTCLGLMLPSQAQS) are cleaved as a signal peptide. Substrate is bound by residues 40–43 (WMNE), Q59, W67, and 99–100 (FT). The active site involves E43. N109 carries an N-linked (GlcNAc...) asparagine glycan. 175–176 (RD) is a binding site for substrate. N-linked (GlcNAc...) asparagine glycosylation is present at N210. E233 contributes to the substrate binding site. N-linked (GlcNAc...) asparagine glycosylation is found at N372 and N419.

The protein belongs to the glycosyl hydrolase 32 family.

It localises to the secreted. The catalysed reaction is Endohydrolysis of (2-&gt;1)-beta-D-fructosidic linkages in inulin.. Activity is stimulated by Mn(2+), Fe(2+) Ca(2+) metal ions and DTT; and inhibited by glucose, Mg(2+), Zn(2+), Cu(2+), Hg(2+), Al(3+), and Fe(3+). Its function is as follows. Endo-inulinase involved in utilization of the plant storage polymer inulin, consisting of fructooligosaccharides with a degree of polymerization (DP) value from 2 to 60. The sequence is that of Extracellular endo-inulinase inuA (inuA) from Aspergillus niger.